The chain runs to 380 residues: MKYSSEFRDKTIAQGLARAIDAEVSSQRAYRFVEFCGGHTHAISRYGLEDLLPANVRMIHGPGCPVCVLPASRIDMAIRLAERPEVILCVYGDLMRAPGSQGQSLLLAKALGAHIRMVYSTLDAIRLAEQTPGREVVFFAIGFETTTPPTAVMIRIAEHKRLEGLSVFCNHVLTPSAMHRILENPKIRNTGGVPIDGFIGPAHVSTIVGTQPYEPMAEQFEKPIVVAGFEPLDVLQAVLMLVRQVNQNRHEVENQYSRAVTREGNRRAKEEVSQVFELREQFEWRGLGLVPNSGLKLKQSYAKFDAETRFAIHDLRVADNPACECCAILRGAKRPIDCKLFGNICTPETPIGACMVSSEGACAAYWTYRRVRDEQARQTS.

The Fe cation site is built by C36, C64, and C67.

Belongs to the HypD family. [4Fe-4S] cluster is required as a cofactor.

It participates in protein modification; [NiFe] hydrogenase maturation. In terms of biological role, involved in the maturation of [NiFe] hydrogenases. Involved in the biosynthesis of the Fe(CN)(2)CO cofactor. This is Hydrogenase maturation factor HypD1 (hypD1) from Bradyrhizobium diazoefficiens (strain JCM 10833 / BCRC 13528 / IAM 13628 / NBRC 14792 / USDA 110).